The following is a 699-amino-acid chain: Proline-rich receptor-like protein kinase PERK7 (699 aa).

The interval 1–167 (MAEGQSPENS…TSNSGSNSSS (167 aa)) is disordered. Topologically, residues 1 to 172 (MAEGQSPENS…SNSSSNDGLN (172 aa)) are extracellular. Composition is skewed to pro residues over residues 9–23 (NSPP…PSPP) and 43–68 (SPPP…PPLP). N-linked (GlcNAc...) asparagine glycosylation occurs at asparagine 70. Over residues 100–121 (PPQQSDNNGNKGNNNENNKGND) the composition is skewed to low complexity. N-linked (GlcNAc...) asparagine glycosylation occurs at asparagine 131. Residues 148 to 158 (HSQPRSLAPPT) are compositionally biased toward polar residues. Asparagine 164 is a glycosylation site (N-linked (GlcNAc...) asparagine). The helical transmembrane segment at 173-193 (IGAVIGLVAAAGILFIVMILL) threads the bilayer. Residues 194–699 (CVCCFRKKKK…SKTTTTNRGI (506 aa)) lie on the Cytoplasmic side of the membrane. The residue at position 325 (threonine 325) is a Phosphothreonine. The Protein kinase domain occupies 336–615 (FSKDRLLGQG…VRTLEGDASL (280 aa)). Residues 342–350 (LGQGGFGYV) and lysine 364 contribute to the ATP site. Tyrosine 410 bears the Phosphotyrosine mark. Aspartate 461 (proton acceptor) is an active-site residue. Serine 465 and serine 494 each carry phosphoserine. 2 positions are modified to phosphothreonine: threonine 495 and threonine 500. A Phosphotyrosine modification is found at tyrosine 508. 2 disordered regions span residues 609-639 (LEGD…DYEM) and 658-699 (DYGA…NRGI). Over residues 687 to 699 (GSTSKTTTTNRGI) the composition is skewed to polar residues.

This sequence belongs to the protein kinase superfamily. Ser/Thr protein kinase family. In terms of tissue distribution, mostly expressed in flower buds.

The protein localises to the cell membrane. The enzyme catalyses L-seryl-[protein] + ATP = O-phospho-L-seryl-[protein] + ADP + H(+). The catalysed reaction is L-threonyl-[protein] + ATP = O-phospho-L-threonyl-[protein] + ADP + H(+). This is Proline-rich receptor-like protein kinase PERK7 (PERK7) from Arabidopsis thaliana (Mouse-ear cress).